The sequence spans 178 residues: MAELITVARPYAEAVYSLATEQGKLDQWSDALSWLAAMVNNPDLAQVVTNPKHTAQEVEALMLDVLGSRGNDDVKRFIAALIENARLTLLPEIAAQFELLKAQSENIVDALVESAFALSDEQKAELTNTLSKKYGKAVRLDVRENADLIGGVRVSVGDDVIDASVRGKLQAMAASLKN.

The protein belongs to the ATPase delta chain family. F-type ATPases have 2 components, F(1) - the catalytic core - and F(0) - the membrane proton channel. F(1) has five subunits: alpha(3), beta(3), gamma(1), delta(1), epsilon(1). F(0) has three main subunits: a(1), b(2) and c(10-14). The alpha and beta chains form an alternating ring which encloses part of the gamma chain. F(1) is attached to F(0) by a central stalk formed by the gamma and epsilon chains, while a peripheral stalk is formed by the delta and b chains.

It is found in the cell inner membrane. F(1)F(0) ATP synthase produces ATP from ADP in the presence of a proton or sodium gradient. F-type ATPases consist of two structural domains, F(1) containing the extramembraneous catalytic core and F(0) containing the membrane proton channel, linked together by a central stalk and a peripheral stalk. During catalysis, ATP synthesis in the catalytic domain of F(1) is coupled via a rotary mechanism of the central stalk subunits to proton translocation. Functionally, this protein is part of the stalk that links CF(0) to CF(1). It either transmits conformational changes from CF(0) to CF(1) or is implicated in proton conduction. In Chromobacterium violaceum (strain ATCC 12472 / DSM 30191 / JCM 1249 / CCUG 213 / NBRC 12614 / NCIMB 9131 / NCTC 9757 / MK), this protein is ATP synthase subunit delta.